The chain runs to 532 residues: Phosphoenolpyruvate carboxykinase (ATP) (532 aa).

Substrate contacts are provided by Arg60, Tyr194, and Lys200. Residues Lys200, His219, and 237 to 245 each bind ATP; that span reads GLSGTGKTT. 2 residues coordinate Mn(2+): Lys200 and His219. A Mn(2+)-binding site is contributed by Asp258. Glu286, Arg324, and Thr449 together coordinate ATP. Arg324 lines the substrate pocket.

Belongs to the phosphoenolpyruvate carboxykinase (ATP) family. Requires Mn(2+) as cofactor.

It is found in the cytoplasm. It carries out the reaction oxaloacetate + ATP = phosphoenolpyruvate + ADP + CO2. Its pathway is carbohydrate biosynthesis; gluconeogenesis. In terms of biological role, involved in the gluconeogenesis. Catalyzes the conversion of oxaloacetate (OAA) to phosphoenolpyruvate (PEP) through direct phosphoryl transfer between the nucleoside triphosphate and OAA. This Paracoccus denitrificans (strain Pd 1222) protein is Phosphoenolpyruvate carboxykinase (ATP).